The chain runs to 479 residues: MNRNPDHNTFPNITLKIIETYLGRLPSVNEYHMLKLQTRNIQKITVFNKDIFVSLVKKNKKRFFSDVDTSASEIKDRILSYFSKQTQTYNIGKLFTIIELQSVLVTTYTNILGVLTIKAPNVISSKISYNVTSMEELARDMLNSMNVAVIDKAKVMGRHNVSSLVKNVNKLMEEYLRRHNKSCICYGSYSLYLINPNIRYGDIDILQTNSRTFLIDLAFLIKFITGNNIILSKIPYLRNYMVIKDENDNHIIDSFNIRQDTMNVVPKIFIDNIYIVDPTFQLLNMIKMFSQIDRLEDLSKDPEKFNARMATMLEYVRYTHGIVFDGKRNNMPMKCIIDENNRVVTVTTKDYFSFKKCLVYLDENVLSSDILDLNADTSCDFESVTNSVYLIHDNIMYTYFSNTILLSDKGKVHEISARGLCAHILLYQMLTSGAYKQCLSDLLNSMMNRDKIPIYSHTERDKKHGRHGFINIEKDIIVF.

Residues aspartate 202 and aspartate 204 contribute to the active site. 3 residues coordinate Ca(2+): aspartate 202, aspartate 204, and aspartate 253.

It belongs to the poxviridae poly(A) polymerase catalytic subunit family. Heterodimer of a large (catalytic) subunit and a small (regulatory) subunit.

The enzyme catalyses RNA(n) + ATP = RNA(n)-3'-adenine ribonucleotide + diphosphate. Polymerase that creates the 3'-poly(A) tail of mRNA's. This is Poly(A) polymerase catalytic subunit (OPG063) from Homo sapiens (Human).